Consider the following 192-residue polypeptide: Phosphomevalonate kinase (192 aa).

ATP contacts are provided by residues 17–23 and Arg-141; that span reads KRKSGKD. Residue Asn-170 participates in substrate binding. ATP-binding residues include His-171, Arg-176, and Gln-180.

As to quaternary structure, monomer. In terms of tissue distribution, heart, liver, skeletal muscle, kidney, and pancreas. Lower level in brain, placenta and lung.

It localises to the cytoplasm. Its subcellular location is the cytosol. The catalysed reaction is (R)-5-phosphomevalonate + ATP = (R)-5-diphosphomevalonate + ADP. It participates in isoprenoid biosynthesis; isopentenyl diphosphate biosynthesis via mevalonate pathway; isopentenyl diphosphate from (R)-mevalonate: step 2/3. In terms of biological role, catalyzes the reversible ATP-dependent phosphorylation of mevalonate 5-phosphate to produce mevalonate diphosphate and ADP, a key step in the mevalonic acid mediated biosynthesis of isopentenyl diphosphate and other polyisoprenoid metabolites. The protein is Phosphomevalonate kinase (PMVK) of Homo sapiens (Human).